Consider the following 181-residue polypeptide: Inner membrane-spanning protein YciB (181 aa).

A run of 5 helical transmembrane segments spans residues 8-28 (FPII…ATAA), 53-73 (ITLI…NAIF), 76-96 (WKPT…HFFG), 121-141 (LSWA…VYNF), and 149-169 (FKLF…AFYI).

This sequence belongs to the YciB family.

The protein resides in the cell inner membrane. In terms of biological role, plays a role in cell envelope biogenesis, maintenance of cell envelope integrity and membrane homeostasis. The sequence is that of Inner membrane-spanning protein YciB from Coxiella burnetii (strain RSA 331 / Henzerling II).